The sequence spans 258 residues: L-aspartate dehydrogenase 1 (258 aa).

NAD(+) contacts are provided by A121 and N181. The active site involves H211.

It belongs to the L-aspartate dehydrogenase family.

The enzyme catalyses L-aspartate + NADP(+) + H2O = oxaloacetate + NH4(+) + NADPH + H(+). It catalyses the reaction L-aspartate + NAD(+) + H2O = oxaloacetate + NH4(+) + NADH + H(+). It participates in cofactor biosynthesis; NAD(+) biosynthesis; iminoaspartate from L-aspartate (dehydrogenase route): step 1/1. Specifically catalyzes the NAD or NADP-dependent dehydrogenation of L-aspartate to iminoaspartate. In Bordetella parapertussis (strain 12822 / ATCC BAA-587 / NCTC 13253), this protein is L-aspartate dehydrogenase 1.